Here is a 108-residue protein sequence, read N- to C-terminus: MSTGPSEVIRIRMEAYDHAVLDQSARDIVDTVKATASIVHGPIPLPTRIERYTVLSSPFVNKKARQQYEIRTHKRLVDIVQASAKTIEALNKLSLPAGVDIKIKASAR.

This sequence belongs to the universal ribosomal protein uS10 family. Part of the 30S ribosomal subunit.

Functionally, involved in the binding of tRNA to the ribosomes. The protein is Small ribosomal subunit protein uS10 of Rhodopirellula baltica (strain DSM 10527 / NCIMB 13988 / SH1).